The chain runs to 1004 residues: 2-oxoglutarate dehydrogenase E1 component (1004 aa).

It belongs to the alpha-ketoglutarate dehydrogenase family. As to quaternary structure, homodimer. Part of the 2-oxoglutarate dehydrogenase (OGDH) complex composed of E1 (2-oxoglutarate dehydrogenase), E2 (dihydrolipoamide succinyltransferase) and E3 (dihydrolipoamide dehydrogenase); the complex contains multiple copies of the three enzymatic components (E1, E2 and E3). The cofactor is thiamine diphosphate.

It carries out the reaction N(6)-[(R)-lipoyl]-L-lysyl-[protein] + 2-oxoglutarate + H(+) = N(6)-[(R)-S(8)-succinyldihydrolipoyl]-L-lysyl-[protein] + CO2. E1 component of the 2-oxoglutarate dehydrogenase (OGDH) complex which catalyzes the decarboxylation of 2-oxoglutarate, the first step in the conversion of 2-oxoglutarate to succinyl-CoA and CO(2). This Brucella ovis (strain ATCC 25840 / 63/290 / NCTC 10512) protein is 2-oxoglutarate dehydrogenase E1 component.